The primary structure comprises 505 residues: Histidine--tRNA ligase, mitochondrial (505 aa).

Residues 1 to 31 constitute a mitochondrion transit peptide; the sequence is MPHLGPLRRRAWAALLGQLLRPPSTVCTRGC. A Phosphoserine modification is found at S66. L-histidine-binding positions include 130–132, R157, Q173, D177, R326, and 330–331; these read DLT and YY. The residue at position 443 (K443) is an N6-acetyllysine.

It belongs to the class-II aminoacyl-tRNA synthetase family. Homodimer.

It localises to the mitochondrion. The enzyme catalyses tRNA(His) + L-histidine + ATP = L-histidyl-tRNA(His) + AMP + diphosphate + H(+). Mitochondrial aminoacyl-tRNA synthetase that catalyzes the ATP-dependent ligation of histidine to the 3'-end of its cognate tRNA, via the formation of an aminoacyl-adenylate intermediate (His-AMP). The protein is Histidine--tRNA ligase, mitochondrial (Hars2) of Mus musculus (Mouse).